A 482-amino-acid chain; its full sequence is Bifunctional protein GlmU (482 aa).

Residues 1–238 (MSAIRPAAVV…HREIAGINNR (238 aa)) form a pyrophosphorylase region. Residues 12–15 (LAAG), K26, Q79, and 84–85 (GT) each bind UDP-N-acetyl-alpha-D-glucosamine. D110 contacts Mg(2+). The UDP-N-acetyl-alpha-D-glucosamine site is built by G147, E163, N178, and N236. N236 provides a ligand contact to Mg(2+). The segment at 239–259 (VQLAEARRILNDRLLTRAMLA) is linker. Positions 260–482 (GVTVVDPATT…VASRKPEGED (223 aa)) are N-acetyltransferase. 2 residues coordinate UDP-N-acetyl-alpha-D-glucosamine: R341 and K359. Residue H371 is the Proton acceptor of the active site. UDP-N-acetyl-alpha-D-glucosamine is bound by residues Y374 and N385. Acetyl-CoA is bound by residues A388, 394 to 395 (NY), S413, A431, and R448.

It in the N-terminal section; belongs to the N-acetylglucosamine-1-phosphate uridyltransferase family. The protein in the C-terminal section; belongs to the transferase hexapeptide repeat family. In terms of assembly, homotrimer. It depends on Mg(2+) as a cofactor.

Its subcellular location is the cytoplasm. The enzyme catalyses alpha-D-glucosamine 1-phosphate + acetyl-CoA = N-acetyl-alpha-D-glucosamine 1-phosphate + CoA + H(+). It catalyses the reaction N-acetyl-alpha-D-glucosamine 1-phosphate + UTP + H(+) = UDP-N-acetyl-alpha-D-glucosamine + diphosphate. Its pathway is nucleotide-sugar biosynthesis; UDP-N-acetyl-alpha-D-glucosamine biosynthesis; N-acetyl-alpha-D-glucosamine 1-phosphate from alpha-D-glucosamine 6-phosphate (route II): step 2/2. It functions in the pathway nucleotide-sugar biosynthesis; UDP-N-acetyl-alpha-D-glucosamine biosynthesis; UDP-N-acetyl-alpha-D-glucosamine from N-acetyl-alpha-D-glucosamine 1-phosphate: step 1/1. It participates in bacterial outer membrane biogenesis; LPS lipid A biosynthesis. Functionally, catalyzes the last two sequential reactions in the de novo biosynthetic pathway for UDP-N-acetylglucosamine (UDP-GlcNAc). The C-terminal domain catalyzes the transfer of acetyl group from acetyl coenzyme A to glucosamine-1-phosphate (GlcN-1-P) to produce N-acetylglucosamine-1-phosphate (GlcNAc-1-P), which is converted into UDP-GlcNAc by the transfer of uridine 5-monophosphate (from uridine 5-triphosphate), a reaction catalyzed by the N-terminal domain. The chain is Bifunctional protein GlmU from Streptomyces avermitilis (strain ATCC 31267 / DSM 46492 / JCM 5070 / NBRC 14893 / NCIMB 12804 / NRRL 8165 / MA-4680).